The primary structure comprises 315 residues: Serpentine receptor class delta-31 (315 aa).

Transmembrane regions (helical) follow at residues 6 to 26, 38 to 58, 83 to 103, 124 to 144, 174 to 194, 225 to 245, and 256 to 276; these read LHSI…YLAI, AIIT…FFVM, ACYV…IWMI, VFVA…WFSI, ITLI…YIWI, FQVF…SMFT, and AISV…ILFV.

The protein belongs to the nematode receptor-like protein srd family.

Its subcellular location is the membrane. In Caenorhabditis elegans, this protein is Serpentine receptor class delta-31 (srd-31).